A 519-amino-acid chain; its full sequence is MLPDTGILSPFTTAVNPDPPQSQTLRVPRPTPVLDRPTTDSTANKRVKLDPTVSKVPWEPSVKPSSSKVEGASGLEQDSFMPTLGSVFKKKKKDKEATRLKDSSGNPDTIIEDSPVTPSTERSLSQSLGSAPSTATTANSHGGLSTVTSATSQTPTSPIATGGQAEKDHPMTTPVNESAGHSRSDSQTLQKAENAVRATKGKYTLQDFNFQRTLGTGSFGRVHLVQSKHNLRFYAVKVLKKAQVVKMKQVEHTNDERRMLQRVKHPFLITLWGTFQDAKNLYMVMDFIEGGELFSLLRKSQRFPNPVAKFYAAEVALALDYLHSMNIIYRDLKPENLLLDRHGHLKITDFGFAKEVPDITWTLCGTPDYLAPEVVASKGYNKSVDWWSLGILIFEMLCGYTPFWDGGSPMKIYENILRGRVKYPAYIHPDAMNLLQQLITPDLTKRLGNLYHGSRSVLEHPWFAEVNWERLLSKQIEPPYVPPVRGGIGDASLFDKYPEETEEYGKDGPDQYGHFFTDF.

The segment at 1-195 (MLPDTGILSP…SQTLQKAENA (195 aa)) is disordered. Composition is skewed to polar residues over residues 10–25 (PFTT…SQTL), 116–159 (VTPS…TSPI), and 173–191 (TPVN…TLQK). One can recognise a Protein kinase domain in the interval 208–463 (FNFQRTLGTG…SRSVLEHPWF (256 aa)). ATP-binding positions include 214–222 (LGTGSFGRV) and Lys-237. Asp-331 (proton acceptor) is an active-site residue. In terms of domain architecture, AGC-kinase C-terminal spans 464–519 (AEVNWERLLSKQIEPPYVPPVRGGIGDASLFDKYPEETEEYGKDGPDQYGHFFTDF).

It belongs to the protein kinase superfamily. Ser/Thr protein kinase family.

The enzyme catalyses L-seryl-[protein] + ATP = O-phospho-L-seryl-[protein] + ADP + H(+). It catalyses the reaction L-threonyl-[protein] + ATP = O-phospho-L-threonyl-[protein] + ADP + H(+). Its activity is regulated as follows. Activated by cAMP. In terms of biological role, functions downstream of adenylate cyclase to regulate trap-development for nematode capture. This is cAMP-dependent protein kinase catalytic subunit from Arthrobotrys oligospora (strain ATCC 24927 / CBS 115.81 / DSM 1491) (Nematode-trapping fungus).